We begin with the raw amino-acid sequence, 341 residues long: S-adenosylmethionine:tRNA ribosyltransferase-isomerase (341 aa).

The protein belongs to the QueA family. In terms of assembly, monomer.

It localises to the cytoplasm. The enzyme catalyses 7-aminomethyl-7-carbaguanosine(34) in tRNA + S-adenosyl-L-methionine = epoxyqueuosine(34) in tRNA + adenine + L-methionine + 2 H(+). It functions in the pathway tRNA modification; tRNA-queuosine biosynthesis. Functionally, transfers and isomerizes the ribose moiety from AdoMet to the 7-aminomethyl group of 7-deazaguanine (preQ1-tRNA) to give epoxyqueuosine (oQ-tRNA). The protein is S-adenosylmethionine:tRNA ribosyltransferase-isomerase of Clostridium botulinum (strain Eklund 17B / Type B).